Here is a 484-residue protein sequence, read N- to C-terminus: ATP synthase subunit beta (484 aa).

Residue 168 to 175 participates in ATP binding; sequence GGAGVGKT.

This sequence belongs to the ATPase alpha/beta chains family. F-type ATPases have 2 components, CF(1) - the catalytic core - and CF(0) - the membrane proton channel. CF(1) has five subunits: alpha(3), beta(3), gamma(1), delta(1), epsilon(1). CF(0) has three main subunits: a(1), b(2) and c(9-12). The alpha and beta chains form an alternating ring which encloses part of the gamma chain. CF(1) is attached to CF(0) by a central stalk formed by the gamma and epsilon chains, while a peripheral stalk is formed by the delta and b chains.

It is found in the cell membrane. The catalysed reaction is ATP + H2O + 4 H(+)(in) = ADP + phosphate + 5 H(+)(out). In terms of biological role, produces ATP from ADP in the presence of a proton gradient across the membrane. The catalytic sites are hosted primarily by the beta subunits. This is ATP synthase subunit beta from Renibacterium salmoninarum (strain ATCC 33209 / DSM 20767 / JCM 11484 / NBRC 15589 / NCIMB 2235).